Consider the following 671-residue polypeptide: Peroxisomal membrane protein PEX17 (671 aa).

A run of 8 helical transmembrane segments spans residues 127 to 147, 187 to 207, 212 to 232, 258 to 278, 318 to 338, 372 to 392, 475 to 495, and 504 to 524; these read LPLLAGLILADYDISADGPTL, VPVLACISIAQVYSLLGDVAI, FLQVGLDLIFSNYGLEMGTAL, VVALLNTFAHIASSCIVHVDI, YLKWELFTLCIIMQGIANMLL, FAAYDYVFFSAIDVLLSEYAP, LVEAAHSVILAGLAVPTNAVV, and MGGVLPLFPGVFSWNQFVLAI.

Its subcellular location is the peroxisome membrane. Functionally, involved in peroxisome biosynthesis. Required for the import of a subset of matrix proteins into peroxisomes. The polypeptide is Peroxisomal membrane protein PEX17 (PEX17) (Yarrowia lipolytica (strain CLIB 122 / E 150) (Yeast)).